The chain runs to 399 residues: Tyrosine--tRNA ligase (399 aa).

Residues 42–51 carry the 'HIGH' region motif; sequence PTAPDIHLGH. Positions 226–230 match the 'KMSKS' region motif; it reads KMSKS. Lysine 229 provides a ligand contact to ATP. An S4 RNA-binding domain is found at 337–398; it reads LTIGYILQRA…GKRRFAKVKV (62 aa).

The protein belongs to the class-I aminoacyl-tRNA synthetase family. TyrS type 2 subfamily. Homodimer.

The protein localises to the cytoplasm. It catalyses the reaction tRNA(Tyr) + L-tyrosine + ATP = L-tyrosyl-tRNA(Tyr) + AMP + diphosphate + H(+). Catalyzes the attachment of tyrosine to tRNA(Tyr) in a two-step reaction: tyrosine is first activated by ATP to form Tyr-AMP and then transferred to the acceptor end of tRNA(Tyr). This Coxiella burnetii (strain RSA 493 / Nine Mile phase I) protein is Tyrosine--tRNA ligase.